A 469-amino-acid polypeptide reads, in one-letter code: Proline--tRNA ligase (469 aa).

The protein belongs to the class-II aminoacyl-tRNA synthetase family. ProS type 3 subfamily. Homodimer.

It is found in the cytoplasm. It carries out the reaction tRNA(Pro) + L-proline + ATP = L-prolyl-tRNA(Pro) + AMP + diphosphate. In terms of biological role, catalyzes the attachment of proline to tRNA(Pro) in a two-step reaction: proline is first activated by ATP to form Pro-AMP and then transferred to the acceptor end of tRNA(Pro). The protein is Proline--tRNA ligase of Methanosphaera stadtmanae (strain ATCC 43021 / DSM 3091 / JCM 11832 / MCB-3).